The chain runs to 393 residues: Formate-dependent phosphoribosylglycinamide formyltransferase (393 aa).

Residues 22 to 23 (EL) and E82 each bind N(1)-(5-phospho-beta-D-ribosyl)glycinamide. ATP contacts are provided by residues R114, K155, 160–165 (SSGKGQ), 195–198 (EGLV), and E203. The 190-residue stretch at 119 to 308 (LLAAETLQLP…EFALHVRAFL (190 aa)) folds into the ATP-grasp domain. Positions 267 and 279 each coordinate Mg(2+). N(1)-(5-phospho-beta-D-ribosyl)glycinamide contacts are provided by residues D286, K355, and 362–363 (RR).

This sequence belongs to the PurK/PurT family. As to quaternary structure, homodimer.

The enzyme catalyses N(1)-(5-phospho-beta-D-ribosyl)glycinamide + formate + ATP = N(2)-formyl-N(1)-(5-phospho-beta-D-ribosyl)glycinamide + ADP + phosphate + H(+). It functions in the pathway purine metabolism; IMP biosynthesis via de novo pathway; N(2)-formyl-N(1)-(5-phospho-D-ribosyl)glycinamide from N(1)-(5-phospho-D-ribosyl)glycinamide (formate route): step 1/1. In terms of biological role, involved in the de novo purine biosynthesis. Catalyzes the transfer of formate to 5-phospho-ribosyl-glycinamide (GAR), producing 5-phospho-ribosyl-N-formylglycinamide (FGAR). Formate is provided by PurU via hydrolysis of 10-formyl-tetrahydrofolate. The polypeptide is Formate-dependent phosphoribosylglycinamide formyltransferase (Yersinia enterocolitica serotype O:8 / biotype 1B (strain NCTC 13174 / 8081)).